A 227-amino-acid polypeptide reads, in one-letter code: Cytochrome c oxidase subunit 2 (227 aa).

At 1–14 (MAYPFQLGFQDATS) the chain is on the mitochondrial intermembrane side. The chain crosses the membrane as a helical span at residues 15 to 45 (PIMEELLHFHDHTLMIVFLISSLVLYIISLM). Residues 46 to 59 (LTTKLTHTSTMDAQ) lie on the Mitochondrial matrix side of the membrane. The chain crosses the membrane as a helical span at residues 60–87 (EVETIWTILPAIILILIALPSLRILYMM). Residues 88 to 227 (DEINNPSLTV…HFEKWSASML (140 aa)) lie on the Mitochondrial intermembrane side of the membrane. Positions 161, 196, 198, 200, 204, and 207 each coordinate Cu cation. Glu-198 is a Mg(2+) binding site.

The protein belongs to the cytochrome c oxidase subunit 2 family. In terms of assembly, component of the cytochrome c oxidase (complex IV, CIV), a multisubunit enzyme composed of 14 subunits. The complex is composed of a catalytic core of 3 subunits MT-CO1, MT-CO2 and MT-CO3, encoded in the mitochondrial DNA, and 11 supernumerary subunits COX4I, COX5A, COX5B, COX6A, COX6B, COX6C, COX7A, COX7B, COX7C, COX8 and NDUFA4, which are encoded in the nuclear genome. The complex exists as a monomer or a dimer and forms supercomplexes (SCs) in the inner mitochondrial membrane with NADH-ubiquinone oxidoreductase (complex I, CI) and ubiquinol-cytochrome c oxidoreductase (cytochrome b-c1 complex, complex III, CIII), resulting in different assemblies (supercomplex SCI(1)III(2)IV(1) and megacomplex MCI(2)III(2)IV(2)). Found in a complex with TMEM177, COA6, COX18, COX20, SCO1 and SCO2. Interacts with TMEM177 in a COX20-dependent manner. Interacts with COX20. Interacts with COX16. It depends on Cu cation as a cofactor.

It is found in the mitochondrion inner membrane. It carries out the reaction 4 Fe(II)-[cytochrome c] + O2 + 8 H(+)(in) = 4 Fe(III)-[cytochrome c] + 2 H2O + 4 H(+)(out). Functionally, component of the cytochrome c oxidase, the last enzyme in the mitochondrial electron transport chain which drives oxidative phosphorylation. The respiratory chain contains 3 multisubunit complexes succinate dehydrogenase (complex II, CII), ubiquinol-cytochrome c oxidoreductase (cytochrome b-c1 complex, complex III, CIII) and cytochrome c oxidase (complex IV, CIV), that cooperate to transfer electrons derived from NADH and succinate to molecular oxygen, creating an electrochemical gradient over the inner membrane that drives transmembrane transport and the ATP synthase. Cytochrome c oxidase is the component of the respiratory chain that catalyzes the reduction of oxygen to water. Electrons originating from reduced cytochrome c in the intermembrane space (IMS) are transferred via the dinuclear copper A center (CU(A)) of subunit 2 and heme A of subunit 1 to the active site in subunit 1, a binuclear center (BNC) formed by heme A3 and copper B (CU(B)). The BNC reduces molecular oxygen to 2 water molecules using 4 electrons from cytochrome c in the IMS and 4 protons from the mitochondrial matrix. In Ceratotherium simum (White rhinoceros), this protein is Cytochrome c oxidase subunit 2 (MT-CO2).